The following is a 319-amino-acid chain: Homoserine kinase (319 aa).

100-110 (PLSSGMGSSAS) is an ATP binding site.

Belongs to the GHMP kinase family. Homoserine kinase subfamily.

The protein localises to the cytoplasm. It catalyses the reaction L-homoserine + ATP = O-phospho-L-homoserine + ADP + H(+). Its pathway is amino-acid biosynthesis; L-threonine biosynthesis; L-threonine from L-aspartate: step 4/5. Catalyzes the ATP-dependent phosphorylation of L-homoserine to L-homoserine phosphate. The sequence is that of Homoserine kinase from Chloroherpeton thalassium (strain ATCC 35110 / GB-78).